A 342-amino-acid chain; its full sequence is Succinylglutamate desuccinylase (342 aa).

Zn(2+) is bound by residues His63, Glu66, and His159. Glu222 is a catalytic residue.

The protein belongs to the AspA/AstE family. Succinylglutamate desuccinylase subfamily. The cofactor is Zn(2+).

The enzyme catalyses N-succinyl-L-glutamate + H2O = L-glutamate + succinate. Its pathway is amino-acid degradation; L-arginine degradation via AST pathway; L-glutamate and succinate from L-arginine: step 5/5. Its function is as follows. Transforms N(2)-succinylglutamate into succinate and glutamate. This Paraburkholderia xenovorans (strain LB400) protein is Succinylglutamate desuccinylase.